The primary structure comprises 89 residues: MALSVEEKAQIVTDYQQAVGDTGSPEVQVALLTANINKLQGHFKANGKDHHSRRGLIRMVNQRRKLLDYLKGKDLSRYSTLIGRLGLRR.

The protein belongs to the universal ribosomal protein uS15 family. In terms of assembly, part of the 30S ribosomal subunit. Forms a bridge to the 50S subunit in the 70S ribosome, contacting the 23S rRNA.

One of the primary rRNA binding proteins, it binds directly to 16S rRNA where it helps nucleate assembly of the platform of the 30S subunit by binding and bridging several RNA helices of the 16S rRNA. Functionally, forms an intersubunit bridge (bridge B4) with the 23S rRNA of the 50S subunit in the ribosome. This Pseudomonas fluorescens (strain ATCC BAA-477 / NRRL B-23932 / Pf-5) protein is Small ribosomal subunit protein uS15.